Consider the following 432-residue polypeptide: Ribosome biogenesis protein WDR12 homolog (432 aa).

The interval 13-97 (LQIRLVALNK…ESVIEVVYFQ (85 aa)) is ubiquitin-like (UBL) domain. 7 WD repeats span residues 109–146 (LHSD…YAIF), 148–190 (GHES…KSVE), 197–236 (GHTQ…KDDD), 265–303 (GHTD…NKSD), 305–345 (NVNK…DQTV), 352–392 (SHKN…APLY), and 396–432 (GHED…AQRS).

This sequence belongs to the WD repeat WDR12/YTM1 family.

The protein localises to the nucleus. It localises to the nucleolus. Its subcellular location is the nucleoplasm. Its function is as follows. Required for maturation of ribosomal RNAs and formation of the large ribosomal subunit. This chain is Ribosome biogenesis protein WDR12 homolog, found in Trichoplax adhaerens (Trichoplax reptans).